The primary structure comprises 167 residues: uncharacterized protein (167 aa).

Helical transmembrane passes span 96-115 and 119-138; these read YVPA…FNFY and WGAL…IIAV.

The protein localises to the cell membrane. This is an uncharacterized protein from Bacillus subtilis (strain 168).